Here is a 2717-residue protein sequence, read N- to C-terminus: Naringenin synthase (2717 aa).

The interval 13 to 422 (HHAVESRDKV…VGRKKELIIR (410 aa)) is adenylation (A) domain. The 87-residue stretch at 531 to 617 (AAVEALVLAE…AVRDYLFNRL (87 aa)) folds into the Carrier 1 domain. S576 bears the O-(pantetheine 4'-phosphoryl)serine mark. A Ketosynthase family 3 (KS3) domain is found at 638–1066 (AEPIAIISMA…GTNAHIILEQ (429 aa)). Active-site for beta-ketoacyl synthase activity residues include C810, H945, and H988. The 259-residue stretch at 1204-1462 (PIFSRAFKEA…GPSAVLSPHV (259 aa)) folds into the Malonyl-CoA:ACP transacylase (MAT) domain. The interval 1549–1688 (HGVLYRTTSI…GTLKLISLPP (140 aa)) is N-terminal hotdog fold. A PKS/mFAS DH domain is found at 1549 to 1847 (HGVLYRTTSI…LRAVQPPVVE (299 aa)). Positions 1561-1842 (TNDIICAGFV…ISEVMLRAVQ (282 aa)) are dehydratase (DH) domain. The active-site Proton acceptor; for dehydratase activity is H1581. A C-terminal hotdog fold region spans residues 1703–1847 (NSEVDVSKAY…LRAVQPPVVE (145 aa)). D1764 acts as the Proton donor; for dehydratase activity in catalysis. Positions 2008–2186 (GTVLITGGTG…AVSLAWGPWA (179 aa)) constitute a Ketoreductase (KR) domain. Residues 2277 to 2354 (SRSDTLLGLV…ALVQYLLDRI (78 aa)) form the Carrier 2 domain. O-(pantetheine 4'-phosphoryl)serine is present on S2313. Residues 2361-2373 (EIELDQDVAEEET) show a composition bias toward acidic residues. Residues 2361-2412 (EIELDQDVAEEETVSGTNGHQNGHQNGTQNGHSNGHANGASTNGDATDGIDP) are disordered. Residues 2375–2396 (SGTNGHQNGHQNGTQNGHSNGH) show a composition bias toward low complexity. The interval 2497–2711 (SLSVYSAVAA…AIAVEIEHWA (215 aa)) is thioester reductase (TE) domain.

The protein in the N-terminal section; belongs to the NRP synthetase family. The cofactor is pantetheine 4'-phosphate.

Functionally, PKS-NRPS hybrid synthetase that, alone, is sufficient to produce naringenin chalcone, the direct precursor of naringenin, by using p-coumaric acid (p-CA) or p-hydroxybenzoic acid (p-HBA) with the involvement of malonyl-CoA molecules. The adenylation (A) domain activates p-CA or p-HBA as adenylates, which are transferred to the thiol group of the pantetheinyl residue of the T domain, and further transferred to the adjacent PKS portion of fnsA. Besides p-CA and p-HBA, the A domain is also able to activate other substrates such as cinnamic acid and salicyclic acid. Within the PKS portion of fnsA, p-CA and p-HBA act as starter units for respectively three or four malonyl-CoA molecules for elongation by the AT and KS domains of fnsA. Afterwards, naringenin chalcone is cyclized through Claisen condensation and thereby released either spontaneously or catalyzed by the TE domain. Finally, naringenin chalcone is converted to naringenin spontaneously or by a chalcone isomerase. This Pestalotiopsis fici (strain W106-1 / CGMCC3.15140) protein is Naringenin synthase.